A 170-amino-acid chain; its full sequence is UPF0316 protein CLK_3798 (170 aa).

2 helical membrane-spanning segments follow: residues M1–I21 and I36–I56.

It belongs to the UPF0316 family.

The protein resides in the cell membrane. The protein is UPF0316 protein CLK_3798 of Clostridium botulinum (strain Loch Maree / Type A3).